The chain runs to 138 residues: MAPK kinase substrate protein At1g80180 (138 aa).

Residues 52 to 138 are disordered; that stretch reads TSEVQDQTTK…RKRPAKRRSR (87 aa). Over residues 69–81 the composition is skewed to basic and acidic residues; that stretch reads KPIRTDGGMERSR. S98 carries the phosphoserine modification. S105 bears the Phosphoserine; by MAPK6 mark. Residues 121–138 show a composition bias toward basic residues; that stretch reads QPGKKVNQRKRPAKRRSR.

In terms of tissue distribution, expressed in developing cotyledons, mature cotyledons, cotyledon epidermis and stomata.

May play a role in the regulation of stomata patterning. The sequence is that of MAPK kinase substrate protein At1g80180 from Arabidopsis thaliana (Mouse-ear cress).